The sequence spans 372 residues: MRSKVTGAQRWVVKIGSALLTADGKGLDRTAMGVWVEQMVALHEAGVELVLVSSGAVAAGMSRLGWTARPSAMHELQAAAAIGQMGLVQAWESSFAEHGRHTAQILLTHDDLSDRKRYLNARSTLRALVELKVIPVINENDTVVTDEIRFGDNDTLAALVANLVEADLLVILTDRDGMFDADPRSNPDAQLIYEARADDPTLDAVAGGTGGALGRGGMQTKLRAARLAARSGAHTIIVGGRLERVLDRLKAGERIGTLLSPERGMLAARKQWLAGHLQTRGTLVLDDGAVSALSQGNKSLLPVGVKLVQGSFRRGEMVVCVAPDGREIARGLANYSALEAQKIIGQSSDAIVGLLGYMAEPELVHRDNLILV.

Lysine 14 is an ATP binding site. Residues serine 54, aspartate 141, and asparagine 153 each contribute to the substrate site. Position 173–174 (173–174) interacts with ATP; sequence TD. The 79-residue stretch at 280 to 358 folds into the PUA domain; that stretch reads RGTLVLDDGA…DAIVGLLGYM (79 aa).

The protein belongs to the glutamate 5-kinase family.

The protein resides in the cytoplasm. The enzyme catalyses L-glutamate + ATP = L-glutamyl 5-phosphate + ADP. It functions in the pathway amino-acid biosynthesis; L-proline biosynthesis; L-glutamate 5-semialdehyde from L-glutamate: step 1/2. Catalyzes the transfer of a phosphate group to glutamate to form L-glutamate 5-phosphate. The chain is Glutamate 5-kinase from Pseudomonas fluorescens (strain Pf0-1).